We begin with the raw amino-acid sequence, 603 residues long: Polypeptide N-acetylgalactosaminyltransferase 10 (603 aa).

Over 1 to 11 (MRRKEKRLLQA) the chain is Cytoplasmic. The chain crosses the membrane as a helical; Signal-anchor for type II membrane protein span at residues 12–31 (VALVLAALVLLPNVGLWALY). The Lumenal portion of the chain corresponds to 32-603 (RERQPDGTPG…STVLEKFNRN (572 aa)). Residues 38–59 (GTPGGSGAAVAPAAGQGSHSRQ) form a disordered region. Residues 45–55 (AAVAPAAGQGS) show a composition bias toward low complexity. N-linked (GlcNAc...) asparagine glycans are attached at residues Asn-124 and Asn-146. Cystine bridges form between Cys-135-Cys-365, Cys-356-Cys-432, Cys-471-Cys-488, Cys-523-Cys-538, and Cys-563-Cys-578. The interval 144-253 (LPNTSIIIPF…VNWLPPLLDR (110 aa)) is catalytic subdomain A. His-154, Glu-156, Asp-185, and Arg-214 together coordinate substrate. Asp-237 is a Mn(2+) binding site. Ser-238 lines the substrate pocket. Position 239 (His-239) interacts with Mn(2+). The catalytic subdomain B stretch occupies residues 311 to 373 (PFESPVMAGG…PCSRVGHIYR (63 aa)). Trp-342 is a substrate binding site. His-370 contacts Mn(2+). 2 residues coordinate substrate: Arg-373 and Tyr-378. Positions 373–384 (RKYVPYKVPAGV) are flexible loop. The 133-residue stretch at 458-590 (AAWGEIRNVG…SSLTQQWLFE (133 aa)) folds into the Ricin B-type lectin domain. Asn-593 is a glycosylation site (N-linked (GlcNAc...) asparagine).

Belongs to the glycosyltransferase 2 family. GalNAc-T subfamily. The cofactor is Mn(2+). In terms of tissue distribution, widely expressed. Expressed at high level in small intestine, and at intermediate levels in stomach, pancreas, ovary, thyroid gland and spleen. Weakly expressed in other tissues.

Its subcellular location is the golgi apparatus membrane. The enzyme catalyses L-seryl-[protein] + UDP-N-acetyl-alpha-D-galactosamine = a 3-O-[N-acetyl-alpha-D-galactosaminyl]-L-seryl-[protein] + UDP + H(+). It carries out the reaction L-threonyl-[protein] + UDP-N-acetyl-alpha-D-galactosamine = a 3-O-[N-acetyl-alpha-D-galactosaminyl]-L-threonyl-[protein] + UDP + H(+). Its pathway is protein modification; protein glycosylation. Catalyzes the initial reaction in O-linked oligosaccharide biosynthesis, the transfer of an N-acetyl-D-galactosamine residue to a serine or threonine residue on the protein receptor. Has activity toward Muc5Ac and EA2 peptide substrates. The polypeptide is Polypeptide N-acetylgalactosaminyltransferase 10 (GALNT10) (Homo sapiens (Human)).